The primary structure comprises 338 residues: Glyceraldehyde-3-phosphate dehydrogenase (338 aa).

NAD(+) contacts are provided by residues 11 to 12 and G111; that span reads TI. 140–142 provides a ligand contact to D-glyceraldehyde 3-phosphate; sequence SCN. Residue C141 is the Nucleophile of the active site. An NAD(+)-binding site is contributed by R169. 195–196 serves as a coordination point for D-glyceraldehyde 3-phosphate; that stretch reads HG. Q302 contributes to the NAD(+) binding site.

The protein belongs to the glyceraldehyde-3-phosphate dehydrogenase family. Homotetramer.

The protein resides in the cytoplasm. It catalyses the reaction D-glyceraldehyde 3-phosphate + phosphate + NADP(+) = (2R)-3-phospho-glyceroyl phosphate + NADPH + H(+). It carries out the reaction D-glyceraldehyde 3-phosphate + phosphate + NAD(+) = (2R)-3-phospho-glyceroyl phosphate + NADH + H(+). It functions in the pathway carbohydrate degradation; glycolysis; pyruvate from D-glyceraldehyde 3-phosphate: step 1/5. The chain is Glyceraldehyde-3-phosphate dehydrogenase (gap) from Methanobacterium formicicum.